A 246-amino-acid polypeptide reads, in one-letter code: 4-hydroxy-tetrahydrodipicolinate reductase (246 aa).

7–12 (GCSGRM) provides a ligand contact to NAD(+). Arginine 34 lines the NADP(+) pocket. Residues 76-78 (ATT) and 102-105 (CPNT) contribute to the NAD(+) site. The active-site Proton donor/acceptor is the histidine 135. Histidine 136 provides a ligand contact to (S)-2,3,4,5-tetrahydrodipicolinate. Lysine 139 functions as the Proton donor in the catalytic mechanism. Residue 145 to 146 (GT) participates in (S)-2,3,4,5-tetrahydrodipicolinate binding.

Belongs to the DapB family.

Its subcellular location is the cytoplasm. The catalysed reaction is (S)-2,3,4,5-tetrahydrodipicolinate + NAD(+) + H2O = (2S,4S)-4-hydroxy-2,3,4,5-tetrahydrodipicolinate + NADH + H(+). The enzyme catalyses (S)-2,3,4,5-tetrahydrodipicolinate + NADP(+) + H2O = (2S,4S)-4-hydroxy-2,3,4,5-tetrahydrodipicolinate + NADPH + H(+). It participates in amino-acid biosynthesis; L-lysine biosynthesis via DAP pathway; (S)-tetrahydrodipicolinate from L-aspartate: step 4/4. In terms of biological role, catalyzes the conversion of 4-hydroxy-tetrahydrodipicolinate (HTPA) to tetrahydrodipicolinate. This chain is 4-hydroxy-tetrahydrodipicolinate reductase, found in Chlamydia caviae (strain ATCC VR-813 / DSM 19441 / 03DC25 / GPIC) (Chlamydophila caviae).